The chain runs to 588 residues: Glutamyl-tRNA(Gln) amidotransferase subunit B, mitochondrial (588 aa).

The N-terminal 109 residues, 1–109 (MLRSWIGSGT…RAPTSTSETP (109 aa)), are a transit peptide targeting the mitochondrion. Positions 22-35 (SSLPSPKASFSSAP) are enriched in low complexity. Residues 22–50 (SSLPSPKASFSSAPNRYLQPPTSADRVPL) form a disordered region.

Belongs to the GatB/GatE family. GatB subfamily. Subunit of the heterotrimeric GatCAB amidotransferase (AdT) complex, composed of A, B and C subunits.

The protein localises to the mitochondrion. It carries out the reaction L-glutamyl-tRNA(Gln) + L-glutamine + ATP + H2O = L-glutaminyl-tRNA(Gln) + L-glutamate + ADP + phosphate + H(+). Functionally, allows the formation of correctly charged Gln-tRNA(Gln) through the transamidation of misacylated Glu-tRNA(Gln) in the mitochondria. The reaction takes place in the presence of glutamine and ATP through an activated gamma-phospho-Glu-tRNA(Gln). The protein is Glutamyl-tRNA(Gln) amidotransferase subunit B, mitochondrial of Penicillium rubens (strain ATCC 28089 / DSM 1075 / NRRL 1951 / Wisconsin 54-1255) (Penicillium chrysogenum).